The chain runs to 301 residues: Rhodopsin (301 aa).

Topologically, residues L1–M18 are extracellular. The helical transmembrane segment at Y19 to V43 threads the bilayer. Over F44–N55 the chain is Cytoplasmic. The chain crosses the membrane as a helical span at residues L56 to I78. Topologically, residues T79–C92 are extracellular. Cysteines 92 and 169 form a disulfide. A helical transmembrane segment spans residues Q93–F115. The 'Ionic lock' involved in activated form stabilization signature appears at D116 to Y118. At D116–K134 the chain is on the cytoplasmic side. The chain crosses the membrane as a helical span at residues A135–F155. The Extracellular portion of the chain corresponds to G156 to S182. Residue N165 is glycosylated (N-linked (GlcNAc...) asparagine). Residues Y183–V204 traverse the membrane as a helical segment. The Cytoplasmic portion of the chain corresponds to F205–K245. The helical transmembrane segment at I246 to V267 threads the bilayer. Residues G268–V278 lie on the Extracellular side of the membrane. A helical membrane pass occupies residues Y279–I300. N6-(retinylidene)lysine is present on K288.

This sequence belongs to the G-protein coupled receptor 1 family. Opsin subfamily. In terms of assembly, homodimer. Interacts with GNAQ. Post-translationally, contains one covalently linked retinal chromophore.

The protein localises to the cell projection. It localises to the rhabdomere membrane. Functionally, photoreceptor required for image-forming vision at low light intensity. Can use both retinal and 3-dehydroretinal as visual pigment. Light-induced isomerization of 11-cis to all-trans retinal triggers a conformational change that activates signaling via G-proteins. Signaling via GNAQ probably mediates the activation of phospholipase C. This Cambarellus shufeldtii (Cajun dwarf crayfish) protein is Rhodopsin (RHO).